A 138-amino-acid chain; its full sequence is Small ribosomal subunit protein uS12 (138 aa).

Residue aspartate 89 is modified to 3-methylthioaspartic acid. Residues 101-138 (ALDTAGTQNRNQGRSKYGTKRPKKGAATAAKGPVKGKK) form a disordered region. Residues 105 to 114 (AGTQNRNQGR) show a composition bias toward polar residues. The span at 125 to 138 (GAATAAKGPVKGKK) shows a compositional bias: low complexity.

It belongs to the universal ribosomal protein uS12 family. Part of the 30S ribosomal subunit. Contacts proteins S8 and S17. May interact with IF1 in the 30S initiation complex.

Its function is as follows. With S4 and S5 plays an important role in translational accuracy. In terms of biological role, interacts with and stabilizes bases of the 16S rRNA that are involved in tRNA selection in the A site and with the mRNA backbone. Located at the interface of the 30S and 50S subunits, it traverses the body of the 30S subunit contacting proteins on the other side and probably holding the rRNA structure together. The combined cluster of proteins S8, S12 and S17 appears to hold together the shoulder and platform of the 30S subunit. This chain is Small ribosomal subunit protein uS12, found in Heliobacterium modesticaldum (strain ATCC 51547 / Ice1).